A 392-amino-acid polypeptide reads, in one-letter code: Chaperone protein DnaJ (392 aa).

The J domain occupies 2–67 (DYYTILGVAK…QKRESYDRYG (66 aa)). Residues 149 to 227 (GVEKELLVSG…CRGQGRIKDK (79 aa)) form a CR-type zinc finger. C162, C165, C179, C182, C201, C204, C215, and C218 together coordinate Zn(2+). CXXCXGXG motif repeat units lie at residues 162–169 (CDACSGSG), 179–186 (CDRCKGSG), 201–208 (CPDCSGEG), and 215–222 (CSECRGQG).

This sequence belongs to the DnaJ family. As to quaternary structure, homodimer. It depends on Zn(2+) as a cofactor.

It is found in the cytoplasm. In terms of biological role, participates actively in the response to hyperosmotic and heat shock by preventing the aggregation of stress-denatured proteins and by disaggregating proteins, also in an autonomous, DnaK-independent fashion. Unfolded proteins bind initially to DnaJ; upon interaction with the DnaJ-bound protein, DnaK hydrolyzes its bound ATP, resulting in the formation of a stable complex. GrpE releases ADP from DnaK; ATP binding to DnaK triggers the release of the substrate protein, thus completing the reaction cycle. Several rounds of ATP-dependent interactions between DnaJ, DnaK and GrpE are required for fully efficient folding. Also involved, together with DnaK and GrpE, in the DNA replication of plasmids through activation of initiation proteins. The chain is Chaperone protein DnaJ from Chlamydia muridarum (strain MoPn / Nigg).